Consider the following 101-residue polypeptide: Small ribosomal subunit protein uS14 (101 aa).

It belongs to the universal ribosomal protein uS14 family. Part of the 30S ribosomal subunit. Contacts proteins S3 and S10.

In terms of biological role, binds 16S rRNA, required for the assembly of 30S particles and may also be responsible for determining the conformation of the 16S rRNA at the A site. This Hyphomonas neptunium (strain ATCC 15444) protein is Small ribosomal subunit protein uS14.